Consider the following 191-residue polypeptide: Adenylate kinase (191 aa).

12–17 (GSGKTT) is an ATP binding site. Positions 34 to 63 (STGDLLRAESAKKTERGLLIEKFTSQGELV) are NMP. Residues T35, R40, 61-63 (ELV), 88-91 (GYPR), and Q95 each bind AMP. An LID region spans residues 130-136 (GRSRGAD). Residue R131 participates in ATP binding. AMP-binding residues include R133 and R145. Residue R173 coordinates ATP.

It belongs to the adenylate kinase family. As to quaternary structure, monomer.

Its subcellular location is the cytoplasm. The catalysed reaction is AMP + ATP = 2 ADP. Its pathway is purine metabolism; AMP biosynthesis via salvage pathway; AMP from ADP: step 1/1. In terms of biological role, catalyzes the reversible transfer of the terminal phosphate group between ATP and AMP. Plays an important role in cellular energy homeostasis and in adenine nucleotide metabolism. The chain is Adenylate kinase from Helicobacter pylori (strain HPAG1).